The sequence spans 98 residues: DNA/RNA-binding protein Alba (98 aa).

Lysine 16 bears the N6-acetyllysine mark.

This sequence belongs to the histone-like Alba family. Acetylated. Acetylation at Lys-16 decreases DNA-binding affinity.

It is found in the cytoplasm. The protein localises to the chromosome. In terms of biological role, binds double-stranded DNA tightly but without sequence specificity. Involved in DNA compaction. This chain is DNA/RNA-binding protein Alba, found in Metallosphaera sedula (strain ATCC 51363 / DSM 5348 / JCM 9185 / NBRC 15509 / TH2).